The primary structure comprises 905 residues: Lateral signaling target protein 2 homolog (905 aa).

Residue Lys87 forms a Glycyl lysine isopeptide (Lys-Gly) (interchain with G-Cter in ubiquitin) linkage. Ser334 is modified (phosphoserine). The interval 354–441 (DEMSSLLSPP…RGQDGQSGEV (88 aa)) is disordered. 2 stretches are compositionally biased toward polar residues: residues 358 to 367 (SLLSPPSACQ) and 418 to 437 (PGNT…QDGQ). Residue Thr512 is modified to Phosphothreonine. 2 disordered regions span residues 516-552 (NPKS…DNSH) and 589-691 (PGSV…RGDV). 2 stretches are compositionally biased toward basic and acidic residues: residues 542–552 (PRAEGTGDNSH) and 605–615 (GGDKEPERIDE). The span at 647–656 (SGPQVDTASR) shows a compositional bias: polar residues. A compositionally biased stretch (basic and acidic residues) spans 659 to 678 (GEGEVKGQPEPEARKQDPEK). An FYVE-type zinc finger spans residues 835 to 895 (DEACGFCTSC…VCTHCYMFHV (61 aa)). Positions 841, 844, 857, 860, 865, 868, and 887 each coordinate Zn(2+). Phosphothreonine; by MAP2K is present on Thr888. Zn(2+) is bound at residue Cys890.

It belongs to the lst-2 family. As to quaternary structure, interacts with TRIM3. In terms of processing, monoubiquitination at Lys-87 prevents binding to phosphatidylinositol 3-phosphate (PI3P) and localization to early endosome membranes. Enriched in brain (at protein level).

The protein localises to the cytoplasm. It localises to the cytosol. The protein resides in the early endosome membrane. Negative regulator of epidermal growth factor receptor (EGFR) signaling. Acts by promoting EGFR degradation in endosomes when not monoubiquitinated. The sequence is that of Lateral signaling target protein 2 homolog (Zfyve28) from Mus musculus (Mouse).